A 473-amino-acid chain; its full sequence is Photosystem II CP43 reaction center protein (473 aa).

The propeptide occupies methionine 1–glutamate 14. An N-acetylthreonine modification is found at threonine 15. Threonine 15 carries the phosphothreonine modification. The next 5 membrane-spanning stretches (helical) occupy residues leucine 69–alanine 93, leucine 134–asparagine 155, lysine 178–threonine 200, lysine 255–serine 275, and tryptophan 291–alanine 312. Glutamate 367 is a [CaMn4O5] cluster binding site. A helical transmembrane segment spans residues arginine 447 to proline 471.

This sequence belongs to the PsbB/PsbC family. PsbC subfamily. In terms of assembly, PSII is composed of 1 copy each of membrane proteins PsbA, PsbB, PsbC, PsbD, PsbE, PsbF, PsbH, PsbI, PsbJ, PsbK, PsbL, PsbM, PsbT, PsbX, PsbY, PsbZ, Psb30/Ycf12, at least 3 peripheral proteins of the oxygen-evolving complex and a large number of cofactors. It forms dimeric complexes. The cofactor is Binds multiple chlorophylls and provides some of the ligands for the Ca-4Mn-5O cluster of the oxygen-evolving complex. It may also provide a ligand for a Cl- that is required for oxygen evolution. PSII binds additional chlorophylls, carotenoids and specific lipids..

Its subcellular location is the plastid. It localises to the chloroplast thylakoid membrane. Functionally, one of the components of the core complex of photosystem II (PSII). It binds chlorophyll and helps catalyze the primary light-induced photochemical processes of PSII. PSII is a light-driven water:plastoquinone oxidoreductase, using light energy to abstract electrons from H(2)O, generating O(2) and a proton gradient subsequently used for ATP formation. This is Photosystem II CP43 reaction center protein from Adiantum capillus-veneris (Maidenhair fern).